The following is a 154-amino-acid chain: Resuscitation-promoting factor RpfD (154 aa).

A helical membrane pass occupies residues 21–41 (IVCTVFIETAVVATMFVALLG).

The protein belongs to the transglycosylase family. Rpf subfamily.

It is found in the cell membrane. Factor that stimulates resuscitation of dormant cells. Has peptidoglycan (PG) hydrolytic activity. PG fragments could either directly activate the resuscitation pathway of dormant bacteria or serve as a substrate for endogenous Rpf, resulting in low molecular weight products with resuscitation activity. This is Resuscitation-promoting factor RpfD (rpfD) from Mycobacterium tuberculosis (strain CDC 1551 / Oshkosh).